The chain runs to 274 residues: Pyridoxal phosphate homeostasis protein (274 aa).

S6 is subject to Phosphoserine. At K47 the chain carries N6-(pyridoxal phosphate)lysine. A Phosphotyrosine modification is found at Y69. K125 is modified (N6-succinyllysine). S226 and S244 each carry phosphoserine.

The protein belongs to the pyridoxal phosphate-binding protein YggS/PROSC family.

Pyridoxal 5'-phosphate (PLP)-binding protein, which may be involved in intracellular homeostatic regulation of pyridoxal 5'-phosphate (PLP), the active form of vitamin B6. This Mus musculus (Mouse) protein is Pyridoxal phosphate homeostasis protein.